A 148-amino-acid chain; its full sequence is MSEQEGKNEKKVTEGQWTTGLYDCLSEDISTCCFTWVCPCVAFGRIAEILDKGETSRGLAGLMVVAMSSIGCGWYYASKYRAKLRHQYALPEAPCADGAIHCFCCPCALTQEHRELKHRGLDPSLGWNIENGGLNSNTPPFVASGMDR.

A helical membrane pass occupies residues L59–S78.

It belongs to the cornifelin family.

It localises to the membrane. May be involved in cadmium resistance. In Arabidopsis thaliana (Mouse-ear cress), this protein is Protein PLANT CADMIUM RESISTANCE 9 (PCR9).